An 858-amino-acid chain; its full sequence is Sarcolemmal membrane-associated protein (858 aa).

Residues 1-165 form a necessary for targeting to centrosomes region; that stretch reads MPSALAIFTC…AANTPSMYSQ (165 aa). Topologically, residues 1–832 are cytoplasmic; it reads MPSALAIFTC…REKGNNKPWP (832 aa). The 58-residue stretch at 28 to 85 folds into the FHA domain; that stretch reads IKIGRSVARCRPAQNNATFDCKVLSRNHALVWFDHKTSKFYLQDTKSSNGTFINSQRL. Serine 150 carries the phosphoserine modification. 2 coiled-coil regions span residues 169 to 204 and 232 to 381; these read QLSQYLQEALHREQMLEQKLATLQRLLAITQEASDT and NQTE…ALQV. The segment covering 456–470 has biased composition (basic and acidic residues); it reads KLSKEENQAKAKESD. A disordered region spans residues 456 to 492; it reads KLSKEENQAKAKESDLSDTLSPSKEKSSDDTTDDAQM. A phosphoserine mark is found at serine 472 and serine 476. Residues 516-829 adopt a coiled-coil conformation; it reads QAETEAKQDT…KLLREKGNNK (314 aa). Residues 833–853 form a helical; Anchor for type IV membrane protein membrane-spanning segment; it reads WMPMVAALVAVTAMVLYVPGL. The Extracellular portion of the chain corresponds to 854–858; sequence ARASP.

The protein belongs to the SLMAP family. In terms of assembly, homodimer. Interacts with myosin. Interacts with SIKE1 and both associate with the STRIPAK core complex composed of PP2A catalytic and scaffolding subunits, the striatins (PP2A regulatory subunits), the striatin-associated proteins MOB4, STRIP1 and STRIP2, PDCD10 and members of the STE20 kinases, such as STK24 and STK26. Interacts (via FHA domain) with STK3 (when phosphorylated); the interaction associates STK3 with the STRIPAK complex.

It is found in the cell membrane. Its subcellular location is the sarcolemma. It localises to the cytoplasm. The protein localises to the cytoskeleton. The protein resides in the microtubule organizing center. It is found in the centrosome. Its subcellular location is the endoplasmic reticulum membrane. It localises to the mitochondrion membrane. Its function is as follows. Associates with the striatin-interacting phosphatase and kinase (STRIPAK) core complex, forming the extended (SIKE1:SLMAP)STRIPAK complex. The (SIKE1:SLMAP)STRIPAK complex dephosphorylates STK3 leading to the inhibition of Hippo signaling and the control of cell growth. May play a role during myoblast fusion. In Rattus norvegicus (Rat), this protein is Sarcolemmal membrane-associated protein (Slmap).